A 483-amino-acid chain; its full sequence is 3-isopropylmalate dehydratase large subunit (483 aa).

Residues C361, C424, and C427 each contribute to the [4Fe-4S] cluster site.

Belongs to the aconitase/IPM isomerase family. LeuC type 1 subfamily. As to quaternary structure, heterodimer of LeuC and LeuD. Requires [4Fe-4S] cluster as cofactor.

It catalyses the reaction (2R,3S)-3-isopropylmalate = (2S)-2-isopropylmalate. The protein operates within amino-acid biosynthesis; L-leucine biosynthesis; L-leucine from 3-methyl-2-oxobutanoate: step 2/4. In terms of biological role, catalyzes the isomerization between 2-isopropylmalate and 3-isopropylmalate, via the formation of 2-isopropylmaleate. This chain is 3-isopropylmalate dehydratase large subunit, found in Polaromonas naphthalenivorans (strain CJ2).